We begin with the raw amino-acid sequence, 371 residues long: Cytochrome b (371 aa).

4 helical membrane-spanning segments follow: residues 25–45 (FGSM…SLSM), 69–90 (WVMQ…YMYI), 105–125 (WLSG…GYVL), and 170–190 (FFAL…IHIM). H75 provides a ligand contact to heme b. Residues H174 and H188 each contribute to the heme b site. H193 serves as a coordination point for a ubiquinone. The next 4 membrane-spanning stretches (helical) occupy residues 218–238 (YKDI…VSFF), 280–300 (LGGA…PFTH), 312–332 (LMQF…WTAT), and 339–358 (FTTI…MSNP).

It belongs to the cytochrome b family. As to quaternary structure, the cytochrome bc1 complex contains 3 respiratory subunits (MT-CYB, CYC1 and UQCRFS1), 2 core proteins (UQCRC1 and UQCRC2) and probably 6 low-molecular weight proteins. Heme b serves as cofactor.

Its subcellular location is the mitochondrion inner membrane. Functionally, component of the ubiquinol-cytochrome c reductase complex (complex III or cytochrome b-c1 complex) that is part of the mitochondrial respiratory chain. The b-c1 complex mediates electron transfer from ubiquinol to cytochrome c. Contributes to the generation of a proton gradient across the mitochondrial membrane that is then used for ATP synthesis. The chain is Cytochrome b (MT-CYB) from Candoia aspera (New Guinea boa).